The primary structure comprises 725 residues: Phosphatase and actin regulator 4A (725 aa).

Over residues 1 to 12 (MGQGASTQTLNP) the composition is skewed to polar residues. A disordered region spans residues 1 to 597 (MGQGASTQTL…SSTWNNKEQW (597 aa)). Over residues 55–64 (KPWKWRKKKT) the composition is skewed to basic residues. Composition is skewed to basic and acidic residues over residues 65 to 100 (SDKF…KDIP), 124 to 147 (GDRK…GERK), and 155 to 164 (KRNDGTERMT). One copy of the RPEL 1 repeat lies at 75 to 100 (LVLERKMSVRKPREELIERGLLKDIP). The span at 166 to 177 (MIQSFQKMSLMQ) shows a compositional bias: polar residues. Over residues 212–221 (VIAAPSSAEP) the composition is skewed to low complexity. The segment covering 222–235 (APVPPPPIAKPPPR) has biased composition (pro residues). 2 stretches are compositionally biased toward low complexity: residues 265–276 (PAHTTPATVSTH) and 292–313 (PAHV…LLKQ). Residues 359-368 (TPVTKRNSGD) show a composition bias toward polar residues. Over residues 374 to 384 (PEPPPPAPTSV) the composition is skewed to pro residues. Low complexity predominate over residues 385-401 (PIPAAAPISAPPSTQSD). Residues 402–417 (PPSPTTEPPSQPPPLP) are compositionally biased toward pro residues. The span at 497 to 510 (QKPELEPRSRRGLV) shows a compositional bias: basic and acidic residues. 2 stretches are compositionally biased toward acidic residues: residues 522–536 (AGSE…ESDS) and 545–554 (DNEEDDDEED). A compositionally biased stretch (basic and acidic residues) spans 567–585 (KDTLALKLERQQEKEKSQE). 2 RPEL repeats span residues 606–631 (TALT…LAKN) and 644–669 (RRLT…RFHE).

The protein belongs to the phosphatase and actin regulator family. As to quaternary structure, binds ppp1ca and actin.

It localises to the cytoplasm. Its subcellular location is the cell projection. It is found in the lamellipodium. Functionally, regulator of protein phosphatase 1 (PP1) required for neural tube and optic fissure closure, and enteric neural crest cell (ENCCs) migration during development. Acts as an activator of PP1. During neural tube closure, localizes to the ventral neural tube and activates PP1, leading to down-regulate cell proliferation within cranial neural tissue and the neural retina. Also acts as a regulator of migration of enteric neural crest cells (ENCCs) by activating PP1, leading to repression of the integrin signaling through the rho/rock pathway. The protein is Phosphatase and actin regulator 4A (phactr4a) of Danio rerio (Zebrafish).